The sequence spans 72 residues: Translational regulator CsrA (72 aa).

The protein belongs to the CsrA/RsmA family. Homodimer; the beta-strands of each monomer intercalate to form a hydrophobic core, while the alpha-helices form wings that extend away from the core.

The protein localises to the cytoplasm. Its function is as follows. A translational regulator that binds mRNA to regulate translation initiation and/or mRNA stability. Usually binds in the 5'-UTR at or near the Shine-Dalgarno sequence preventing ribosome-binding, thus repressing translation. Its main target seems to be the major flagellin gene, while its function is anatagonized by FliW. In Clostridium botulinum (strain 657 / Type Ba4), this protein is Translational regulator CsrA.